The sequence spans 196 residues: Proteasome subunit beta 1 (196 aa).

Residues 1-6 constitute a propeptide, removed in mature form; by autocatalysis; it reads MEELPA. Thr-7 serves as the catalytic Nucleophile.

The protein belongs to the peptidase T1B family. As to quaternary structure, the 20S proteasome core is composed of 14 alpha and 14 beta subunits that assemble into four stacked heptameric rings, resulting in a barrel-shaped structure. The two inner rings, each composed of seven catalytic beta subunits, are sandwiched by two outer rings, each composed of seven alpha subunits. The catalytic chamber with the active sites is on the inside of the barrel. Has a gated structure, the ends of the cylinder being occluded by the N-termini of the alpha-subunits. Is capped at one or both ends by the proteasome regulatory ATPase, PAN.

The protein resides in the cytoplasm. It carries out the reaction Cleavage of peptide bonds with very broad specificity.. The formation of the proteasomal ATPase PAN-20S proteasome complex, via the docking of the C-termini of PAN into the intersubunit pockets in the alpha-rings, triggers opening of the gate for substrate entry. Interconversion between the open-gate and close-gate conformations leads to a dynamic regulation of the 20S proteasome proteolysis activity. In terms of biological role, component of the proteasome core, a large protease complex with broad specificity involved in protein degradation. This Saccharolobus islandicus (strain Y.N.15.51 / Yellowstone #2) (Sulfolobus islandicus) protein is Proteasome subunit beta 1.